We begin with the raw amino-acid sequence, 601 residues long: MTSQSIMLLVAFLGVLLALAYPLGLFMAKVGDGTAIRGLGWLLKMENALYRLAGLDTQSAMSWKSYAIALLVFNTLGALFVYAVQRLQAWLPLNPQAFGNVSPDSSFNTAVSFVSNTNWQGYGGESTMSYLTQMLALTGQNFFSAATGIAVAFALIRGFSSRSAKSIGNFWVDLTRSTLYILLPLAIVVSVALMGQGVIQNFSAYQDVALVDPVTYQQAKTTADGQPVVDAEGKPVMETLTAKMQTIAMGPVASQEAIKMLGTNGGGFFNANSAHPYENPTVFSNFIEMLAIFLIPAGLCFTFGRMVGDMRQGWAVLGAMTLIFVVMTSIVMTSEQSAHPAMQALGVDQTTTALQSGGNMEGKETRFGISASALFTAVTTAASCGAVNNMHDSLMPMGGFVPLVLMQFGEVVFGGVGTGLYGMLIFAILSVFIAGLMIGRTPEYLGKKIQSYEMKMASIAILVTPTLVLVGTAIAVLVESGKVGIANPGAHGFSEILYAFTSAANNNGSAFAGLSANTPFYNTMLAIAMWFGRFAMIVPILAIAGSLACKQRLAANAGTMPTHGPLFVALLVGVVVLVGVLNYVPALALGPIVEHLQLFSH.

Helical transmembrane passes span 6 to 26 (IMLLVAFLGVLLALAYPLGLF), 65 to 85 (SYAIALLVFNTLGALFVYAVQ), 136 to 156 (ALTGQNFFSAATGIAVAFALI), 179 to 199 (LYILLPLAIVVSVALMGQGVI), 283 to 303 (FSNFIEMLAIFLIPAGLCFTF), 313 to 333 (GWAVLGAMTLIFVVMTSIVMT), 367 to 387 (FGISASALFTAVTTAASCGAV), 397 to 417 (MGGFVPLVLMQFGEVVFGGVG), 419 to 439 (GLYGMLIFAILSVFIAGLMIG), 458 to 478 (SIAILVTPTLVLVGTAIAVLV), 524 to 544 (MLAIAMWFGRFAMIVPILAIA), and 566 to 586 (LFVALLVGVVVLVGVLNYVPA).

It belongs to the KdpA family. The system is composed of three essential subunits: KdpA, KdpB and KdpC.

Its subcellular location is the cell inner membrane. Functionally, part of the high-affinity ATP-driven potassium transport (or Kdp) system, which catalyzes the hydrolysis of ATP coupled with the electrogenic transport of potassium into the cytoplasm. This subunit binds the periplasmic potassium ions and delivers the ions to the membrane domain of KdpB through an intramembrane tunnel. The chain is Potassium-transporting ATPase potassium-binding subunit from Herminiimonas arsenicoxydans.